Reading from the N-terminus, the 235-residue chain is Sugar fermentation stimulation protein homolog (235 aa).

It belongs to the SfsA family.

This is Sugar fermentation stimulation protein homolog from Nitrosococcus oceani (strain ATCC 19707 / BCRC 17464 / JCM 30415 / NCIMB 11848 / C-107).